A 317-amino-acid polypeptide reads, in one-letter code: Lactamase-like protein adaB (317 aa).

His-97, His-99, Asp-101, and His-102 together coordinate Zn(2+). Asp-101 serves as the catalytic Proton donor/acceptor.

It belongs to the metallo-beta-lactamase superfamily. Requires Zn(2+) as cofactor.

The enzyme catalyses 3-(2,4-dioxopentyl)-2,3,6,8,9-pentahydroxy-1-oxo-1,2,3,4-tetrahydroanthracene-2-carboxyl-[ACP] = 2-acetyl-3,4a,8,10,11,12a-hexahydroxy-1,4,4a,5,12,12a-hexahydrotetracene-1,12-dione + holo-[ACP] + H(+). The protein operates within secondary metabolite biosynthesis. Functionally, lactamase-like protein; part of the gene cluster that mediates the biosynthesis of the linear tetracyclic TAN-1612 neuropeptide Y receptor antagonist. The decaketide backbone of TAN-1612 is synthesized by the non-reducing polyketide synthase adaA via condensation of one acetyl-CoA starter unit with 9 malonyl-CoA units. The FAD-dependent monooxygenase adaC then performs hydroxylation at C2 while the polaketide chain is still attached to the NRPKS adaA. The alpha-hydroxylation step at C2 appears to be crucial for the following C18-C1 Claisen cyclization and release of the C9-hydroxyl version of TAN-1612 from the NRPKS adaA, two steps performed by the lactamase-like protein adaB. Finally, the O-methyltransferase adaD performs the C9 O-methylation to complete the biosynthesis of TAN-1612. This Aspergillus niger (strain ATCC MYA-4892 / CBS 513.88 / FGSC A1513) protein is Lactamase-like protein adaB.